A 180-amino-acid polypeptide reads, in one-letter code: UPF0397 protein SSA_0592 (180 aa).

A run of 5 helical transmembrane segments spans residues 9–29 (VVAT…NIPT), 45–65 (LFSV…GHAI), 72–92 (GGLW…VGFF), 113–133 (LIQF…DVIV), and 146–166 (IVAI…LLTA).

Belongs to the UPF0397 family.

It is found in the cell membrane. The protein is UPF0397 protein SSA_0592 of Streptococcus sanguinis (strain SK36).